Here is an 815-residue protein sequence, read N- to C-terminus: MDNESHSQETESKILEGAKVATRRRRVTRACDMCRRKKIKCDGLRPCKNCKAGKLECTYHMPSSRKSSFSPEYVENLESRVRYLETLLKKNTNFDLSSNSPSFLFFLREQKFQATNELENMSPERKVIFTSMINYGNLFVDAKHGTRYFRGGSSIHVLIQHLIRRLPGDFEICEPYSAYPLGNKNIQFDDNDPEYQFFTPTPRFSIDFMVSSVDPREIQLPGIEEALCITKAAVSYVSGIVFYTTYADFPKKIRLLYSGNYQGNFFPLFLSILCVGYYHHLLNNPSNTELQSLIKKYSFYSERLVKSADNFTIESIQCLLILSIYRYCRTEISAAWYYMKLGLNCCLRLGLHRNITEGFTEEQIDSRRRIFWAIYCYDRQLCTLFGFPLGVRDEDIDQCLPVTPKFPSVTEIEANARLFFFHGVKLYKISSRILTKLYSPNSRNVTKKHISYAVIQDLEQLLDGFYNSLPRVFRAEQPGEFQANHFFYNLQLVYYSFRMLIYRPLLHYLEADSPAMQALKVPDRQTAFTLACKCVDSAIVCVQNLSHLSKGLKRTLDRYYWTTVYCGFSTIVTLIFAALLTKNTNLLIHISVARESIEALAHECVTRRLLPLIDKMRESLMKILESNADGYKQMSPTKAPQVFESESNVPINNGPQQSIDKESNSNTQLPQVETEGQQQSVFDGNIGTIPYQAYNMNEDSFIDINTLSSMLNYHTQAVSIHHPSFYISRSDVPLEEEFQIPNELLAVDPVAESMQENSDIINEAFGLVDPDVSDGKSRESSSLNNSTPFNPTVNIDPASILEHFSQNVMKDSQNS.

A DNA-binding region (zn(2)-C6 fungal-type) is located at residues 31–57; the sequence is CDMCRRKKIKCDGLRPCKNCKAGKLEC. The chain crosses the membrane as a helical span at residues 560-580; that stretch reads YWTTVYCGFSTIVTLIFAALL. 2 disordered regions span residues 646–668 and 769–792; these read ESNVPINNGPQQSIDKESNSNTQ and DPDVSDGKSRESSSLNNSTPFNPT. The segment covering 780–792 has biased composition (polar residues); that stretch reads SSSLNNSTPFNPT.

It is found in the cytoplasm. It localises to the nucleus membrane. This is an uncharacterized protein from Schizosaccharomyces pombe (strain 972 / ATCC 24843) (Fission yeast).